The sequence spans 337 residues: Ribosomal RNA small subunit methyltransferase H (337 aa).

S-adenosyl-L-methionine-binding positions include 45–47, Asp-64, Phe-91, Asp-120, and Gln-127; that span reads GGH.

Belongs to the methyltransferase superfamily. RsmH family.

It localises to the cytoplasm. The enzyme catalyses cytidine(1402) in 16S rRNA + S-adenosyl-L-methionine = N(4)-methylcytidine(1402) in 16S rRNA + S-adenosyl-L-homocysteine + H(+). In terms of biological role, specifically methylates the N4 position of cytidine in position 1402 (C1402) of 16S rRNA. The chain is Ribosomal RNA small subunit methyltransferase H from Corynebacterium glutamicum (strain ATCC 13032 / DSM 20300 / JCM 1318 / BCRC 11384 / CCUG 27702 / LMG 3730 / NBRC 12168 / NCIMB 10025 / NRRL B-2784 / 534).